Here is a 223-residue protein sequence, read N- to C-terminus: MTIERNMKGLLGTKLGMTQVWDENNRVVPVTVIAAGTNVVTQVRTPATDGYNAIQVGYGEIDGRKVTKPQAGHFGKAGTTPRRHLVEIRTALAADYTVGQELAVDTFAAGEEIDVTGTSKGKGFAGTMKRHGFAGVSASHGAHRNHRKPGSIGACATPGRVFKGVRMAGRMGTDTVTTQNVTVHAVDTAKGLILLKGAVPGPKGGLVVLRSAAKSSLTSGKEV.

This sequence belongs to the universal ribosomal protein uL3 family. In terms of assembly, part of the 50S ribosomal subunit. Forms a cluster with proteins L14 and L19.

Functionally, one of the primary rRNA binding proteins, it binds directly near the 3'-end of the 23S rRNA, where it nucleates assembly of the 50S subunit. In Nocardioides sp. (strain ATCC BAA-499 / JS614), this protein is Large ribosomal subunit protein uL3.